Consider the following 144-residue polypeptide: Putative pre-16S rRNA nuclease (144 aa).

Belongs to the YqgF nuclease family.

The protein localises to the cytoplasm. Could be a nuclease involved in processing of the 5'-end of pre-16S rRNA. In Picosynechococcus sp. (strain ATCC 27264 / PCC 7002 / PR-6) (Agmenellum quadruplicatum), this protein is Putative pre-16S rRNA nuclease.